We begin with the raw amino-acid sequence, 244 residues long: ATP synthase subunit 4, mitochondrial (244 aa).

The N-terminal 36 residues, 1 to 36 (MASRLAKSAICAARVRPVLSSRTIPAAATTLTSTRS), are a transit peptide targeting the mitochondrion.

It belongs to the eukaryotic ATPase B chain family. F-type ATPases have 2 components, CF(1) - the catalytic core - and CF(0) - the membrane proton channel. In yeast, the dimeric form of ATP synthase consists of 17 polypeptides: alpha, beta, gamma, delta, epsilon, 4 (B), 5 (OSCP), 6 (A), 8, 9 (C), d, E (Tim11), f, g, h, i/j and k.

The protein localises to the mitochondrion. Its subcellular location is the mitochondrion inner membrane. Its function is as follows. Mitochondrial membrane ATP synthase (F(1)F(0) ATP synthase or Complex V) produces ATP from ADP in the presence of a proton gradient across the membrane which is generated by electron transport complexes of the respiratory chain. F-type ATPases consist of two structural domains, F(1) - containing the extramembraneous catalytic core, and F(0) - containing the membrane proton channel, linked together by a central stalk and a peripheral stalk. During catalysis, ATP synthesis in the catalytic domain of F(1) is coupled via a rotary mechanism of the central stalk subunits to proton translocation. Part of the complex F(0) domain and the peripheric stalk, which acts as a stator to hold the catalytic alpha(3)beta(3) subcomplex and subunit a/ATP6 static relative to the rotary elements. This chain is ATP synthase subunit 4, mitochondrial (ATP4), found in Paracoccidioides brasiliensis.